The sequence spans 225 residues: NAD(P)H-quinone oxidoreductase subunit K, chloroplastic (225 aa).

Residues Cys43, Cys44, Cys108, and Cys139 each contribute to the [4Fe-4S] cluster site.

Belongs to the complex I 20 kDa subunit family. As to quaternary structure, NDH is composed of at least 16 different subunits, 5 of which are encoded in the nucleus. [4Fe-4S] cluster is required as a cofactor.

The protein localises to the plastid. Its subcellular location is the chloroplast thylakoid membrane. The enzyme catalyses a plastoquinone + NADH + (n+1) H(+)(in) = a plastoquinol + NAD(+) + n H(+)(out). The catalysed reaction is a plastoquinone + NADPH + (n+1) H(+)(in) = a plastoquinol + NADP(+) + n H(+)(out). NDH shuttles electrons from NAD(P)H:plastoquinone, via FMN and iron-sulfur (Fe-S) centers, to quinones in the photosynthetic chain and possibly in a chloroplast respiratory chain. The immediate electron acceptor for the enzyme in this species is believed to be plastoquinone. Couples the redox reaction to proton translocation, and thus conserves the redox energy in a proton gradient. This chain is NAD(P)H-quinone oxidoreductase subunit K, chloroplastic, found in Atropa belladonna (Belladonna).